A 436-amino-acid polypeptide reads, in one-letter code: Methylenetetrahydrofolate--tRNA-(uracil-5-)-methyltransferase TrmFO (436 aa).

Position 10 to 15 (10 to 15) interacts with FAD; the sequence is GAGLAG.

Belongs to the MnmG family. TrmFO subfamily. FAD serves as cofactor.

The protein localises to the cytoplasm. It catalyses the reaction uridine(54) in tRNA + (6R)-5,10-methylene-5,6,7,8-tetrahydrofolate + NADH + H(+) = 5-methyluridine(54) in tRNA + (6S)-5,6,7,8-tetrahydrofolate + NAD(+). The enzyme catalyses uridine(54) in tRNA + (6R)-5,10-methylene-5,6,7,8-tetrahydrofolate + NADPH + H(+) = 5-methyluridine(54) in tRNA + (6S)-5,6,7,8-tetrahydrofolate + NADP(+). In terms of biological role, catalyzes the folate-dependent formation of 5-methyl-uridine at position 54 (M-5-U54) in all tRNAs. This is Methylenetetrahydrofolate--tRNA-(uracil-5-)-methyltransferase TrmFO from Staphylococcus carnosus (strain TM300).